The sequence spans 325 residues: tRNA dimethylallyltransferase (325 aa).

Position 25-32 (25-32 (GNTGSGKS)) interacts with ATP. 27-32 (TGSGKS) serves as a coordination point for substrate. The interaction with substrate tRNA stretch occupies residues 50–53 (DSRQ).

Belongs to the IPP transferase family. In terms of assembly, monomer. The cofactor is Mg(2+).

The catalysed reaction is adenosine(37) in tRNA + dimethylallyl diphosphate = N(6)-dimethylallyladenosine(37) in tRNA + diphosphate. Catalyzes the transfer of a dimethylallyl group onto the adenine at position 37 in tRNAs that read codons beginning with uridine, leading to the formation of N6-(dimethylallyl)adenosine (i(6)A). This Dehalococcoides mccartyi (strain ATCC BAA-2266 / KCTC 15142 / 195) (Dehalococcoides ethenogenes (strain 195)) protein is tRNA dimethylallyltransferase.